The sequence spans 226 residues: Nucleoside triphosphate pyrophosphatase (226 aa).

D79 (proton acceptor) is an active-site residue. The tract at residues 204–226 (WSRGTSTHPTPGTSATPKPNPGA) is disordered. Positions 206 to 220 (RGTSTHPTPGTSATP) are enriched in polar residues.

It belongs to the Maf family. It depends on a divalent metal cation as a cofactor.

Its subcellular location is the cytoplasm. It catalyses the reaction a ribonucleoside 5'-triphosphate + H2O = a ribonucleoside 5'-phosphate + diphosphate + H(+). The enzyme catalyses a 2'-deoxyribonucleoside 5'-triphosphate + H2O = a 2'-deoxyribonucleoside 5'-phosphate + diphosphate + H(+). In terms of biological role, nucleoside triphosphate pyrophosphatase. May have a dual role in cell division arrest and in preventing the incorporation of modified nucleotides into cellular nucleic acids. The polypeptide is Nucleoside triphosphate pyrophosphatase (Salinispora tropica (strain ATCC BAA-916 / DSM 44818 / JCM 13857 / NBRC 105044 / CNB-440)).